The sequence spans 520 residues: Arginine biosynthesis bifunctional protein ArgJ, chloroplastic (520 aa).

6 residues coordinate substrate: Thr264, Lys290, Thr301, Glu388, Asn515, and Thr520. The active-site Nucleophile is Thr301.

The protein belongs to the ArgJ family. As to quaternary structure, heterodimer of an alpha and a beta chain.

The protein resides in the plastid. It is found in the chloroplast. The enzyme catalyses N(2)-acetyl-L-ornithine + L-glutamate = N-acetyl-L-glutamate + L-ornithine. It catalyses the reaction L-glutamate + acetyl-CoA = N-acetyl-L-glutamate + CoA + H(+). It participates in amino-acid biosynthesis; L-arginine biosynthesis; L-ornithine and N-acetyl-L-glutamate from L-glutamate and N(2)-acetyl-L-ornithine (cyclic): step 1/1. The protein operates within amino-acid biosynthesis; L-arginine biosynthesis; N(2)-acetyl-L-ornithine from L-glutamate: step 1/4. In terms of biological role, catalyzes two activities which are involved in the cyclic version of arginine biosynthesis: the synthesis of acetylglutamate from glutamate and acetyl-CoA, and of ornithine by transacetylation between acetylornithine and glutamate. This is Arginine biosynthesis bifunctional protein ArgJ, chloroplastic from Physcomitrium patens (Spreading-leaved earth moss).